The primary structure comprises 619 residues: Probable Xaa-Pro aminopeptidase P (619 aa).

The Mn(2+) site is built by Asp415, Asp426, Glu524, and Glu538.

This sequence belongs to the peptidase M24B family. Mn(2+) serves as cofactor.

It catalyses the reaction Release of any N-terminal amino acid, including proline, that is linked to proline, even from a dipeptide or tripeptide.. In terms of biological role, catalyzes the removal of a penultimate prolyl residue from the N-termini of peptides. The polypeptide is Probable Xaa-Pro aminopeptidase P (AMPP) (Fusarium vanettenii (strain ATCC MYA-4622 / CBS 123669 / FGSC 9596 / NRRL 45880 / 77-13-4) (Fusarium solani subsp. pisi)).